A 314-amino-acid polypeptide reads, in one-letter code: 4-hydroxy-3-methylbut-2-enyl diphosphate reductase (314 aa).

Cys12 contributes to the [4Fe-4S] cluster binding site. 2 residues coordinate (2E)-4-hydroxy-3-methylbut-2-enyl diphosphate: His41 and His74. Positions 41 and 74 each coordinate dimethylallyl diphosphate. The isopentenyl diphosphate site is built by His41 and His74. Cys96 provides a ligand contact to [4Fe-4S] cluster. Residue His124 coordinates (2E)-4-hydroxy-3-methylbut-2-enyl diphosphate. His124 contacts dimethylallyl diphosphate. His124 contributes to the isopentenyl diphosphate binding site. Residue Glu126 is the Proton donor of the active site. Thr167 is a binding site for (2E)-4-hydroxy-3-methylbut-2-enyl diphosphate. Position 197 (Cys197) interacts with [4Fe-4S] cluster. 4 residues coordinate (2E)-4-hydroxy-3-methylbut-2-enyl diphosphate: Ser225, Ser226, Asn227, and Ser269. Residues Ser225, Ser226, Asn227, and Ser269 each contribute to the dimethylallyl diphosphate site. Isopentenyl diphosphate contacts are provided by Ser225, Ser226, Asn227, and Ser269.

Belongs to the IspH family. Requires [4Fe-4S] cluster as cofactor.

The enzyme catalyses isopentenyl diphosphate + 2 oxidized [2Fe-2S]-[ferredoxin] + H2O = (2E)-4-hydroxy-3-methylbut-2-enyl diphosphate + 2 reduced [2Fe-2S]-[ferredoxin] + 2 H(+). The catalysed reaction is dimethylallyl diphosphate + 2 oxidized [2Fe-2S]-[ferredoxin] + H2O = (2E)-4-hydroxy-3-methylbut-2-enyl diphosphate + 2 reduced [2Fe-2S]-[ferredoxin] + 2 H(+). It functions in the pathway isoprenoid biosynthesis; dimethylallyl diphosphate biosynthesis; dimethylallyl diphosphate from (2E)-4-hydroxy-3-methylbutenyl diphosphate: step 1/1. Its pathway is isoprenoid biosynthesis; isopentenyl diphosphate biosynthesis via DXP pathway; isopentenyl diphosphate from 1-deoxy-D-xylulose 5-phosphate: step 6/6. Functionally, catalyzes the conversion of 1-hydroxy-2-methyl-2-(E)-butenyl 4-diphosphate (HMBPP) into a mixture of isopentenyl diphosphate (IPP) and dimethylallyl diphosphate (DMAPP). Acts in the terminal step of the DOXP/MEP pathway for isoprenoid precursor biosynthesis. The protein is 4-hydroxy-3-methylbut-2-enyl diphosphate reductase of Haemophilus ducreyi (strain 35000HP / ATCC 700724).